The chain runs to 481 residues: WASH complex subunit 1 (481 aa).

The segment at 1 to 54 is required for WASH complex assembly; the sequence is MVRMTQKRYLEGQVYSVPLIQPDLRREEAVHQITDALQYLEMISTDIFTRVSES. Disordered stretches follow at residues 273-417 and 429-481; these read SVPA…SGGD and RRKG…DWEA. Pro residues predominate over residues 304-341; it reads APPPPPPPPPPPPEPTHVPVPPPGTSAAPPPPPPPPPM. Residues 359 to 481 form a VCA region; that stretch reads KGAPSEVVQP…AADDEDDWEA (123 aa). Residues 371 to 393 form the WH2 domain; the sequence is GRASLLESIRNAGGIGKANLRNV. Residues 392–407 show a composition bias toward basic and acidic residues; it reads NVKERKMEKKKQKEQE.

This sequence belongs to the WASH1 family. Component of the WASH complex.

The protein localises to the early endosome membrane. The protein resides in the recycling endosome membrane. Functionally, acts as a nucleation-promoting factor at the surface of endosomes, where it recruits and activates the Arp2/3 complex to induce actin polymerization, playing a key role in the fission of tubules that serve as transport intermediates during endosome sorting. The sequence is that of WASH complex subunit 1 from Danio rerio (Zebrafish).